The primary structure comprises 330 residues: WRKY transcription factor WRKY51 (330 aa).

The interval glutamine 39–valine 61 is disordered. Over residues proline 51–glutamine 60 the composition is skewed to low complexity. A Nuclear localization signal motif is present at residues phenylalanine 74–leucine 81. 2 disordered regions span residues arginine 91 to serine 117 and tyrosine 302 to alanine 330. Positions proline 101–serine 117 are enriched in low complexity. Residues lysine 245–serine 311 constitute a DNA-binding region (WRKY). Pro residues predominate over residues proline 318–alanine 330.

It belongs to the WRKY group II-a family. As to expression, highly expressed in aleurone cells. In seeds, predominantly present in the plumule, radicle and scutellum of the embryo.

The protein localises to the nucleus. In terms of biological role, transcription factor. Interacts, when in complex with WRKY71, specifically with the W box (5'-(T)TGAC[CT]-3'), a frequently occurring elicitor-responsive cis-acting element. Represses specifically gibberellic acid (GA)-induced promoters in aleurone cells, probably by interfering with GAM1. The polypeptide is WRKY transcription factor WRKY51 (Oryza sativa subsp. indica (Rice)).